Consider the following 454-residue polypeptide: Probable spastin homolog Bm1_53365 (454 aa).

Residue 218 to 225 (GPPGNGKT) coordinates ATP.

This sequence belongs to the AAA ATPase family. Spastin subfamily. In terms of assembly, homohexamer. The homohexamer is stabilized by ATP-binding. The homohexamer may adopt a ring conformation through which microtubules pass prior to being severed. Interacts with microtubules.

It localises to the cytoplasm. The protein localises to the cytoskeleton. The protein resides in the perinuclear region. It catalyses the reaction n ATP + n H2O + a microtubule = n ADP + n phosphate + (n+1) alpha/beta tubulin heterodimers.. Its function is as follows. Severs microtubules, probably in an ATP-dependent fashion. This chain is Probable spastin homolog Bm1_53365, found in Brugia malayi (Filarial nematode worm).